Consider the following 108-residue polypeptide: Nucleoid-associated protein Pmen_2646 (108 aa).

The tract at residues 1–25 is disordered; that stretch reads MMKGGMAGLMKQAQQMQEKMQKMQE.

Belongs to the YbaB/EbfC family. In terms of assembly, homodimer.

The protein localises to the cytoplasm. It localises to the nucleoid. Binds to DNA and alters its conformation. May be involved in regulation of gene expression, nucleoid organization and DNA protection. In Ectopseudomonas mendocina (strain ymp) (Pseudomonas mendocina), this protein is Nucleoid-associated protein Pmen_2646.